Reading from the N-terminus, the 693-residue chain is Elongation factor G (693 aa).

One can recognise a tr-type G domain in the interval 9-283 (ERVRNIGIIA…AVCDYLPSPL (275 aa)). Residues 18 to 25 (AHIDAGKT), 82 to 86 (DTPGH), and 136 to 139 (NKMD) each bind GTP.

The protein belongs to the TRAFAC class translation factor GTPase superfamily. Classic translation factor GTPase family. EF-G/EF-2 subfamily.

The protein resides in the cytoplasm. Functionally, catalyzes the GTP-dependent ribosomal translocation step during translation elongation. During this step, the ribosome changes from the pre-translocational (PRE) to the post-translocational (POST) state as the newly formed A-site-bound peptidyl-tRNA and P-site-bound deacylated tRNA move to the P and E sites, respectively. Catalyzes the coordinated movement of the two tRNA molecules, the mRNA and conformational changes in the ribosome. This is Elongation factor G from Dehalococcoides mccartyi (strain ATCC BAA-2100 / JCM 16839 / KCTC 5957 / BAV1).